A 338-amino-acid chain; its full sequence is Anthranilate phosphoribosyltransferase (338 aa).

Residues glycine 81, 84–85, threonine 89, 91–94, 109–117, and serine 121 each bind 5-phospho-alpha-D-ribose 1-diphosphate; these read GD, NVST, and KHGNRSVSS. Residue glycine 81 coordinates anthranilate. Serine 93 serves as a coordination point for Mg(2+). Asparagine 112 is a binding site for anthranilate. Arginine 167 contributes to the anthranilate binding site. Mg(2+)-binding residues include aspartate 226 and glutamate 227.

This sequence belongs to the anthranilate phosphoribosyltransferase family. As to quaternary structure, homodimer. Mg(2+) is required as a cofactor.

The enzyme catalyses N-(5-phospho-beta-D-ribosyl)anthranilate + diphosphate = 5-phospho-alpha-D-ribose 1-diphosphate + anthranilate. The protein operates within amino-acid biosynthesis; L-tryptophan biosynthesis; L-tryptophan from chorismate: step 2/5. Its function is as follows. Catalyzes the transfer of the phosphoribosyl group of 5-phosphorylribose-1-pyrophosphate (PRPP) to anthranilate to yield N-(5'-phosphoribosyl)-anthranilate (PRA). This Alkalilimnicola ehrlichii (strain ATCC BAA-1101 / DSM 17681 / MLHE-1) protein is Anthranilate phosphoribosyltransferase.